The sequence spans 431 residues: Dihydroorotase (431 aa).

Residues H55 and H57 each contribute to the Zn(2+) site. Residues 57 to 59 and N89 contribute to the substrate site; that span reads HFR. Positions 139, 169, 223, and 290 each coordinate Zn(2+). K139 is subject to N6-carboxylysine. D290 is an active-site residue. Substrate-binding positions include H294 and 308-309; that span reads PG.

This sequence belongs to the metallo-dependent hydrolases superfamily. DHOase family. Class I DHOase subfamily. It depends on Zn(2+) as a cofactor.

It catalyses the reaction (S)-dihydroorotate + H2O = N-carbamoyl-L-aspartate + H(+). Its pathway is pyrimidine metabolism; UMP biosynthesis via de novo pathway; (S)-dihydroorotate from bicarbonate: step 3/3. Functionally, catalyzes the reversible cyclization of carbamoyl aspartate to dihydroorotate. The protein is Dihydroorotase of Methanothermobacter thermautotrophicus (strain ATCC 29096 / DSM 1053 / JCM 10044 / NBRC 100330 / Delta H) (Methanobacterium thermoautotrophicum).